We begin with the raw amino-acid sequence, 680 residues long: MRSRSNGMGKIVGIDLGTTNSVIAVLEGGKPVVIANAEGSRTTPSVVAFGKDGERLVGQLARRQAVLNPQNTFYAVKRFIGREYSELTAESKRVPYTIRRDESGKVRIKCPRLQREFAPEEISAMVLRKLVEDASRYLGEPVTDAVITVPAYFNDSQRQATRDAGRIAGLNVRRIINEPTAAALAYGLDRQQEQTILVFDLGGGTFDVSILEVGDGVFEVKATSGDTQLGGNDFDKLIVDWLAEDFLAKEGIDLRRDRQSLQRLTDAAEKAKIELSGLLETNIDLPFVTATAEGPKHIETTLSRRQFEDLSQGLLQRLRYPVEQALMDAHLTPSQIDAVVLVGGATRMPMVQDLVRQMIGREPKQNVNPDEVVAVGAAIQAGILAGDVKDILLLDVTPLSLGVETIGGVTKVLIPRNTTIPVRRSDIFSTSENNQSQVEIHVVQGERELAAHNKSLGRFKLTGIPPAPRGVPQIQVSFDLDANGLLQVVALDRFSGREQSVVIQGASTLSEEEIQQMLLDAESNAAGDRQRRARIEKRNRSQDLINRAERQLREAAQEFGYQFAAEQRRGIEALVRQLQEAIRNEDDRQIDLTYAALEERLYDFIRQLRLREEEAEDDEEVFKLPNLREAVNKGLDVVRGRERRRDDDEDEWAEPPRTRRSRSYSQRADSAPWDDWDDDW.

Phosphothreonine; by autocatalysis is present on Thr-205. A disordered region spans residues 640 to 680 (GRERRRDDDEDEWAEPPRTRRSRSYSQRADSAPWDDWDDDW).

It belongs to the heat shock protein 70 family.

In terms of biological role, acts as a chaperone. The chain is Chaperone protein dnaK3 (dnaK3) from Thermosynechococcus vestitus (strain NIES-2133 / IAM M-273 / BP-1).